Here is a 224-residue protein sequence, read N- to C-terminus: Probable Brix domain-containing ribosomal biogenesis protein (224 aa).

The Brix domain maps to 1 to 196 (MMLITTSHRP…IWIMEDGRRW (196 aa)).

Functionally, probably involved in the biogenesis of the ribosome. This chain is Probable Brix domain-containing ribosomal biogenesis protein, found in Pyrococcus abyssi (strain GE5 / Orsay).